The chain runs to 242 residues: ATP synthase subunit a (242 aa).

6 helical membrane passes run 29 to 49 (SAVAMIFVSIAASLLLIIAFV), 83 to 103 (VFFPLILTLFLFISLGNIIGM), 114 to 134 (IIVTFSLAMIVFTTTLVYGIY), 140 to 160 (FFSLFLPKNIPLWLAPIMVII), 181 to 201 (VAGHILLKIIAWSIVSLTWFF), and 206 to 226 (IALVIVLIGFELFISILQAYI).

It belongs to the ATPase A chain family. F-type ATPases have 2 components, CF(1) - the catalytic core - and CF(0) - the membrane proton channel. CF(1) has five subunits: alpha(3), beta(3), gamma(1), delta(1), epsilon(1). CF(0) has three main subunits: a(1), b(2) and c(9-12). The alpha and beta chains form an alternating ring which encloses part of the gamma chain. CF(1) is attached to CF(0) by a central stalk formed by the gamma and epsilon chains, while a peripheral stalk is formed by the delta and b chains.

The protein localises to the cell inner membrane. Its function is as follows. Key component of the proton channel; it plays a direct role in the translocation of protons across the membrane. This chain is ATP synthase subunit a, found in Orientia tsutsugamushi (strain Boryong) (Rickettsia tsutsugamushi).